The following is a 193-amino-acid chain: Flagellin B3 (193 aa).

The propeptide occupies 1–12 (MFEFITDEDERG).

Belongs to the archaeal flagellin family. Post-translationally, glycosylated.

It localises to the archaeal flagellum. Flagellin is the subunit protein which polymerizes to form the filaments of archaeal flagella. This is Flagellin B3 (flaB3) from Halobacterium salinarum (strain ATCC 700922 / JCM 11081 / NRC-1) (Halobacterium halobium).